A 368-amino-acid polypeptide reads, in one-letter code: DNA replication and repair protein RecF (368 aa).

30-37 lines the ATP pocket; it reads GKNGSGKT.

Belongs to the RecF family.

It is found in the cytoplasm. The RecF protein is involved in DNA metabolism; it is required for DNA replication and normal SOS inducibility. RecF binds preferentially to single-stranded, linear DNA. It also seems to bind ATP. The chain is DNA replication and repair protein RecF from Marinomonas sp. (strain MWYL1).